We begin with the raw amino-acid sequence, 526 residues long: MFS-type transporter clz19 (526 aa).

A disordered region spans residues 1–49; sequence MNVDTTSPQAPLAGVESKQDGASNEATAKAESTTHDQNESSSFDERPVH. Residues 32 to 49 show a composition bias toward basic and acidic residues; sequence STTHDQNESSSFDERPVH. Residue asparagine 38 is glycosylated (N-linked (GlcNAc...) asparagine). A helical membrane pass occupies residues 59–79; the sequence is ALLAVASFAAAISPASTTTYY. N-linked (GlcNAc...) asparagine glycosylation is present at asparagine 97. 3 helical membrane-spanning segments follow: residues 126-143, 186-206, and 214-234; these read VYLV…GLAL, AYLT…GGLL, and AIFW…LTFF. Residues asparagine 238 and asparagine 253 are each glycosylated (N-linked (GlcNAc...) asparagine). The next 6 membrane-spanning stretches (helical) occupy residues 294–314, 322–342, 384–404, 411–431, 446–466, and 473–493; these read FIVC…ISIF, YGYS…GSIL, LTVS…YGWL, VASV…VLIA, ALGA…VAAV, and IGIG…LPAL.

The protein belongs to the major facilitator superfamily.

The protein resides in the membrane. Its function is as follows. MFS-type transporter; part of the gene cluster that mediates the biosynthesis of squalestatin S1 (SQS1, also known as zaragozic acid A), a heavily oxidized fungal polyketide that offers potent cholesterol lowering activity by targeting squalene synthase (SS). This is MFS-type transporter clz19 from Cochliobolus lunatus (Filamentous fungus).